Here is a 251-residue protein sequence, read N- to C-terminus: Hydroxyacylglutathione hydrolase GloB (251 aa).

Residues His-53, His-55, Asp-57, His-58, His-110, and Asp-127 each contribute to the Zn(2+) site. Residues 136 to 138 (RLF), 165 to 167 (HEY), and 245 to 248 (RSKK) each bind substrate. His-165 is a Zn(2+) binding site.

It belongs to the metallo-beta-lactamase superfamily. Glyoxalase II family. As to quaternary structure, monomer. It depends on Zn(2+) as a cofactor.

It catalyses the reaction an S-(2-hydroxyacyl)glutathione + H2O = a 2-hydroxy carboxylate + glutathione + H(+). It carries out the reaction (R)-S-lactoylglutathione + H2O = (R)-lactate + glutathione + H(+). The protein operates within secondary metabolite metabolism; methylglyoxal degradation; (R)-lactate from methylglyoxal: step 2/2. Its activity is regulated as follows. Is inhibited by Cu(2+). Type II glyoxalase that catalyzes the hydrolysis of (R)-S-lactoylglutathione to (R)-lactate and glutathione. Is more efficient than the isozyme GloC, and plays a major contribution to methylglyoxal (MG) detoxification in E.coli. The two isoenzymes have additive effects and ensure maximal MG degradation. The chain is Hydroxyacylglutathione hydrolase GloB from Escherichia coli (strain K12).